A 157-amino-acid chain; its full sequence is Protein Smg homolog (157 aa).

Belongs to the Smg family.

In Aeromonas hydrophila subsp. hydrophila (strain ATCC 7966 / DSM 30187 / BCRC 13018 / CCUG 14551 / JCM 1027 / KCTC 2358 / NCIMB 9240 / NCTC 8049), this protein is Protein Smg homolog.